A 151-amino-acid chain; its full sequence is Transcriptional regulator MraZ (151 aa).

SpoVT-AbrB domains are found at residues 5–52 (ANAI…PLDE) and 81–124 (AVDL…DEDA).

It belongs to the MraZ family. As to quaternary structure, forms oligomers.

Its subcellular location is the cytoplasm. It is found in the nucleoid. The protein is Transcriptional regulator MraZ of Pseudomonas fluorescens (strain Pf0-1).